A 193-amino-acid polypeptide reads, in one-letter code: Pyridoxal 5'-phosphate synthase subunit PdxT (193 aa).

L-glutamine is bound at residue 48-50; it reads GES. Cys-80 acts as the Nucleophile in catalysis. Residues Arg-107 and 136–137 each bind L-glutamine; that span reads IR. Residues His-172 and Glu-174 each act as charge relay system in the active site.

This sequence belongs to the glutaminase PdxT/SNO family. In the presence of PdxS, forms a dodecamer of heterodimers. Only shows activity in the heterodimer.

It carries out the reaction aldehydo-D-ribose 5-phosphate + D-glyceraldehyde 3-phosphate + L-glutamine = pyridoxal 5'-phosphate + L-glutamate + phosphate + 3 H2O + H(+). The enzyme catalyses L-glutamine + H2O = L-glutamate + NH4(+). It functions in the pathway cofactor biosynthesis; pyridoxal 5'-phosphate biosynthesis. Catalyzes the hydrolysis of glutamine to glutamate and ammonia as part of the biosynthesis of pyridoxal 5'-phosphate. The resulting ammonia molecule is channeled to the active site of PdxS. The polypeptide is Pyridoxal 5'-phosphate synthase subunit PdxT (Clostridium botulinum (strain Loch Maree / Type A3)).